A 213-amino-acid chain; its full sequence is MHHHQNLGDAAAMNGMIPPYEAMAMYEQPKPRFIFKMPRVVPDQRSKFDSDELFRRLSRESEVRYTGYRERAMEERRMRFVNDCRKGYAEISMVASGTNLQLYFNANHNPYAQEQDCDFERERGKVHLRSSFIMNGVCVRFRGWVDLDRLDGAACLEFDEQRAQQEDAQLQEQIQSYNQRMAESRRIYHTPQTPPEDHHHRGGPGLPRGPMGW.

Residues H189–W213 are disordered. The span at G203–W213 shows a compositional bias: gly residues.

This sequence belongs to the CBF-beta family.

It is found in the nucleus. Functionally, regulates the DNA-binding properties of Runt. This chain is Protein brother (Bro), found in Drosophila melanogaster (Fruit fly).